The sequence spans 103 residues: Large ribosomal subunit protein uL24 (103 aa).

This sequence belongs to the universal ribosomal protein uL24 family. In terms of assembly, part of the 50S ribosomal subunit.

Its function is as follows. One of two assembly initiator proteins, it binds directly to the 5'-end of the 23S rRNA, where it nucleates assembly of the 50S subunit. One of the proteins that surrounds the polypeptide exit tunnel on the outside of the subunit. This is Large ribosomal subunit protein uL24 from Lacticaseibacillus casei (strain BL23) (Lactobacillus casei).